A 925-amino-acid chain; its full sequence is Leucine--tRNA ligase (925 aa).

Positions 40–51 (PYPSGAGLHVGH) match the 'HIGH' region motif. The short motif at 700–704 (KMSKS) is the 'KMSKS' region element. Lysine 703 serves as a coordination point for ATP.

Belongs to the class-I aminoacyl-tRNA synthetase family.

Its subcellular location is the cytoplasm. It carries out the reaction tRNA(Leu) + L-leucine + ATP = L-leucyl-tRNA(Leu) + AMP + diphosphate. The sequence is that of Leucine--tRNA ligase from Porphyromonas gingivalis (strain ATCC 33277 / DSM 20709 / CIP 103683 / JCM 12257 / NCTC 11834 / 2561).